An 89-amino-acid chain; its full sequence is Small ribosomal subunit protein uS15 (89 aa).

Belongs to the universal ribosomal protein uS15 family. In terms of assembly, part of the 30S ribosomal subunit. Forms a bridge to the 50S subunit in the 70S ribosome, contacting the 23S rRNA.

In terms of biological role, one of the primary rRNA binding proteins, it binds directly to 16S rRNA where it helps nucleate assembly of the platform of the 30S subunit by binding and bridging several RNA helices of the 16S rRNA. Forms an intersubunit bridge (bridge B4) with the 23S rRNA of the 50S subunit in the ribosome. The chain is Small ribosomal subunit protein uS15 from Nostoc punctiforme (strain ATCC 29133 / PCC 73102).